Consider the following 725-residue polypeptide: Ribonuclease Y (725 aa).

Residues V4–A24 form a helical membrane-spanning segment. Disordered stretches follow at residues D62 to T140, V165 to R195, and E300 to E321. Low complexity-rich tracts occupy residues D84 to G100 and A114 to A137. In terms of domain architecture, KH spans V415–D481. The 94-residue stretch at V541–G634 folds into the HD domain.

The protein belongs to the RNase Y family.

It localises to the cell membrane. Endoribonuclease that initiates mRNA decay. This chain is Ribonuclease Y, found in Frankia alni (strain DSM 45986 / CECT 9034 / ACN14a).